A 5082-amino-acid chain; its full sequence is Malformin synthetase mlfA (5082 aa).

Residues 225–616 (ERHAANRPHS…CGRADTQVKL (392 aa)) are adenylation 1. In terms of domain architecture, Carrier 1 spans 749-822 (SRLEQKIQLA…EAASLAEVQE (74 aa)). S783 is subject to O-(pantetheine 4'-phosphoryl)serine. Residues 860-1291 (ENVFPCTTMQ…ALNTLSLLQA (432 aa)) are condensation 1. Residues 1319–1708 (DRWVTRQPEG…GRKDTQVKLR (390 aa)) form an adenylation 2 region. Positions 1846-1923 (TPTLELERTL…QLAAEVGEPA (78 aa)) constitute a Carrier 2 domain. S1883 carries the post-translational modification O-(pantetheine 4'-phosphoryl)serine. Disordered regions lie at residues 1924–1953 (GQSA…DGVD) and 1986–2012 (GGSS…KKNA). Composition is skewed to low complexity over residues 1926–1950 (SASS…STND) and 1988–2005 (SSSN…SSSS). The segment at 2058-2473 (EDIYPATALQ…AVSCSDKETL (416 aa)) is condensation 2. The adenylation 3 stretch occupies residues 2496–2888 (RRTPHAPAVC…IGRRDGQLKL (393 aa)). A Carrier 3 domain is found at 3024-3100 (RPVTSQEHEM…QLICHLNTIR (77 aa)). S3061 bears the O-(pantetheine 4'-phosphoryl)serine mark. Condensation stretches follow at residues 3117–3582 (WVAL…TYDQ) and 3603–4022 (NIYP…EHLV). An adenylation 4 region spans residues 4047 to 4426 (HNSRQAVFDD…VGRKDNQIKF (380 aa)). Residues 4560–4636 (MPSTAAERKM…DLSDQAKSLI (77 aa)) enclose the Carrier 4 domain. S4597 is subject to O-(pantetheine 4'-phosphoryl)serine. The interval 4673 to 5000 (DVLPTTSFQR…LQTIVQHQNN (328 aa)) is condensation 5.

This sequence belongs to the NRP synthetase family.

The protein operates within secondary metabolite biosynthesis. In terms of biological role, nonribosomal peptide synthetase; part of the gene cluster that mediates the biosynthesis of malformins, cyclic pentapeptides with a disulfide bond between 2 consecutive cysteins, that show potential anti-tumor as well as antimalarial and antitrypanosomal properties. The nonribosomal peptide synthetase mlfA is responsible of the formation of the cyclic pentapeptide. The malformin biosynthesis clusters in malformin-producing fungi also contain enzymes involved in the formation of the disulfide bond between the two consecutive cysteins within malformins, in addition to additional tailoring enzymes such as methyltransferases or oxidoreductases. They are also composed of up to 4 major facilitator superfamily transporters, and transcription factors probably involved in the regulation of the expression of those clusters. The chain is Malformin synthetase mlfA from Aspergillus luchuensis (strain CBS 106.47).